Consider the following 387-residue polypeptide: ATP phosphoribosyltransferase regulatory subunit (387 aa).

It belongs to the class-II aminoacyl-tRNA synthetase family. HisZ subfamily. In terms of assembly, heteromultimer composed of HisG and HisZ subunits.

The protein localises to the cytoplasm. Its pathway is amino-acid biosynthesis; L-histidine biosynthesis; L-histidine from 5-phospho-alpha-D-ribose 1-diphosphate: step 1/9. Required for the first step of histidine biosynthesis. May allow the feedback regulation of ATP phosphoribosyltransferase activity by histidine. The protein is ATP phosphoribosyltransferase regulatory subunit of Psychrobacter cryohalolentis (strain ATCC BAA-1226 / DSM 17306 / VKM B-2378 / K5).